A 281-amino-acid chain; its full sequence is NADPH-dependent 7-cyano-7-deazaguanine reductase (281 aa).

81-83 (VES) serves as a coordination point for substrate. 83-84 (SK) lines the NADPH pocket. The active-site Thioimide intermediate is the C188. Residue D195 is the Proton donor of the active site. 227–228 (HE) lines the substrate pocket. Position 256 to 257 (256 to 257 (RG)) interacts with NADPH. The interval 261–281 (INPLRTSHPQGLPRNMRTARQ) is disordered.

It belongs to the GTP cyclohydrolase I family. QueF type 2 subfamily. As to quaternary structure, homodimer.

It is found in the cytoplasm. It carries out the reaction 7-aminomethyl-7-carbaguanine + 2 NADP(+) = 7-cyano-7-deazaguanine + 2 NADPH + 3 H(+). It participates in tRNA modification; tRNA-queuosine biosynthesis. Functionally, catalyzes the NADPH-dependent reduction of 7-cyano-7-deazaguanine (preQ0) to 7-aminomethyl-7-deazaguanine (preQ1). The chain is NADPH-dependent 7-cyano-7-deazaguanine reductase from Verminephrobacter eiseniae (strain EF01-2).